A 225-amino-acid chain; its full sequence is UPF0758 protein SEQ_1136 (225 aa).

The 123-residue stretch at Pro102 to Leu224 folds into the MPN domain. Residues His173, His175, and Asp186 each contribute to the Zn(2+) site. Residues His173–Asp186 carry the JAMM motif motif.

It belongs to the UPF0758 family.

In Streptococcus equi subsp. equi (strain 4047), this protein is UPF0758 protein SEQ_1136.